We begin with the raw amino-acid sequence, 179 residues long: MYWGGSLADNKSLRINGSIRVREVRLVDAVGQQCGVVPTPEALRMARDINLDLVEVAPQASPPVCKILDYGKYRFEMGKKLRDSKKRQRLQTLKEVRMQPKINDHDMAFKAKHIQRFLDEGDKVKVTIRFRGRELAHTDLGFNVLQNVLGRLVCGYSVEKQAAMEGRSMSMTLTPKSKK.

This sequence belongs to the IF-3 family. In terms of assembly, monomer.

Its subcellular location is the cytoplasm. IF-3 binds to the 30S ribosomal subunit and shifts the equilibrium between 70S ribosomes and their 50S and 30S subunits in favor of the free subunits, thus enhancing the availability of 30S subunits on which protein synthesis initiation begins. The chain is Translation initiation factor IF-3 from Treponema pallidum (strain Nichols).